A 292-amino-acid polypeptide reads, in one-letter code: THO complex subunit 4B (292 aa).

The disordered stretch occupies residues 1–50 (MSGGLDMSLDDIIKSNRKPTGSRGRGGIGGGNNTGGRGGSGSNSGPSRRF). Ser2 is modified (N-acetylserine). Positions 23 to 42 (RGRGGIGGGNNTGGRGGSGS) are enriched in gly residues. In terms of domain architecture, RRM spans 108–185 (TKLYISNLDY…KLMKIEIVGT (78 aa)). Residues 241–252 (GGGFGGGNFRGG) are compositionally biased toward gly residues. Residues 241 to 292 (GGGFGGGNFRGGRGARGRGGRGSGGRGRDENVSAEDLDAELDKYHKEAMETS) form a disordered region. Residues 280–292 (ELDKYHKEAMETS) show a composition bias toward basic and acidic residues.

The protein belongs to the ALYREF family. Interacts with RH15 and RH56.

It is found in the nucleus. The protein resides in the nucleoplasm. Its function is as follows. Export adapter involved in nuclear export of spliced and unspliced mRNA. The sequence is that of THO complex subunit 4B (ALY2) from Arabidopsis thaliana (Mouse-ear cress).